A 366-amino-acid polypeptide reads, in one-letter code: Reticulon-4-interacting protein 1, mitochondrial (366 aa).

The transit peptide at 1 to 20 (MIEKMILRRFFSTKSSTMRA) directs the protein to the mitochondrion.

The protein belongs to the zinc-containing alcohol dehydrogenase family. Quinone oxidoreductase subfamily. Expressed in pharynx, muscles and intestine.

The protein resides in the mitochondrion. Functionally, plays a role in oxygen metabolism in the mitochondria by regulating the levels of reactive oxygen species (ROS) thereby conferring resistance to oxidative stress. Involved in resistance to P.aeruginosa PA14 infection. Regulates lifespan. This is Reticulon-4-interacting protein 1, mitochondrial from Caenorhabditis elegans.